A 641-amino-acid polypeptide reads, in one-letter code: Soluble starch synthase 1, chloroplastic/amyloplastic (641 aa).

K145 contacts ADP-alpha-D-glucose.

This sequence belongs to the glycosyltransferase 1 family. Bacterial/plant glycogen synthase subfamily. In terms of tissue distribution, high expression in leaves and very low in tubers.

The protein localises to the plastid. It localises to the chloroplast. Its subcellular location is the amyloplast. The catalysed reaction is [(1-&gt;4)-alpha-D-glucosyl](n) + ADP-alpha-D-glucose = [(1-&gt;4)-alpha-D-glucosyl](n+1) + ADP + H(+). The protein operates within glycan biosynthesis; starch biosynthesis. In terms of biological role, plays a minor role in starch synthesis in storage organs (tubers), but may contribute to the deposition of transient starch in chloroplasts of leaves. The sequence is that of Soluble starch synthase 1, chloroplastic/amyloplastic from Solanum tuberosum (Potato).